A 956-amino-acid chain; its full sequence is Glutamate receptor ionotropic, kainate 4 (956 aa).

Residues 1 to 20 form the signal peptide; that stretch reads MPRVSAPLVLLPAWLLMVAC. Over 21–545 the chain is Extracellular; it reads SPHSLRIAAI…YFSSLDPFSP (525 aa). N-linked (GlcNAc...) asparagine glycosylation is found at asparagine 158, asparagine 220, asparagine 272, asparagine 286, asparagine 323, asparagine 408, asparagine 415, and asparagine 479. L-glutamate-binding residues include glycine 500, threonine 502, and arginine 507. A helical transmembrane segment spans residues 546–566; that stretch reads GVWLFMLLAYLAVSCVLFLVA. The Cytoplasmic segment spans residues 567–623; it reads RLTPYEWYSPHPCAQGRCNLLVNQYSLGNSLWFPVGGFMQQGSTIAPRALSTRCVSG. The chain crosses the membrane as a helical span at residues 624 to 644; the sequence is VWWAFTLIIISSYTANLAAFL. Residues 645-804 lie on the Extracellular side of the membrane; it reads TVQRMEVPIE…HRAKGLGMEN (160 aa). 3 residues coordinate L-glutamate: serine 674, serine 675, and glutamate 723. N-linked (GlcNAc...) asparagine glycosylation occurs at asparagine 736. Residues 805–825 traverse the membrane as a helical segment; it reads IGGIFVVLICGLIVAIFMAML. The Cytoplasmic segment spans residues 826-956; it reads EFLWTLRHSE…DKTTNSSEPE (131 aa). The segment at 931–956 is disordered; that stretch reads LRARPSPARSEESLEWDKTTNSSEPE. Basic and acidic residues predominate over residues 939-948; that stretch reads RSEESLEWDK.

The protein belongs to the glutamate-gated ion channel (TC 1.A.10.1) family. GRIK4 subfamily. Homodimer. Can form functional heteromeric receptors with GRIK1, GRIK2 and GRIK3. Strong expression in hippocampal CA3 pyramidal cells. Low expression in hippocampal dentate granule cells, in layers II, V and VI of the cortex, and in cerebellar Purkinje cells. No expression in the striatum, reticular thalamus, hypothalamus or amygdaloid complex.

Its subcellular location is the cell membrane. The protein resides in the postsynaptic cell membrane. It localises to the presynaptic cell membrane. Its function is as follows. Ionotropic glutamate receptor that functions as a cation-permeable ligand-gated ion channel, gated by L-glutamate and the glutamatergic agonist kainic acid. Cannot form functional channels on its own and shows channel activity only in heteromeric assembly with GRIK1, GRIK2 and GRIK3 subunits. The sequence is that of Glutamate receptor ionotropic, kainate 4 (Grik4) from Rattus norvegicus (Rat).